Here is a 416-residue protein sequence, read N- to C-terminus: cAMP-dependent protein kinase regulatory subunit (416 aa).

Positions 2-183 (VSSLPKESQA…RLEKSIRNNF (182 aa)) are dimerization and phosphorylation. 11 positions are modified to phosphoserine: Ser3, Ser4, Ser9, Ser68, Ser70, Ser74, Ser77, Ser79, Ser81, Ser83, and Ser84. A dimerization/docking domain (D/D) region spans residues 8–45 (ESQAELQLFQNEINAANPSDFLQFSANYFNKRLEQQRA). Residues 65–138 (PEESFSRPQS…TSTPPLPMHF (74 aa)) form a disordered region. The segment covering 70–84 (SRPQSAQSQSRSRSS) has biased composition (low complexity). Residue Thr129 is modified to Phosphothreonine. A Phosphoserine modification is found at Ser130. 2 positions are modified to phosphothreonine: Thr131 and Thr144. The short motif at 142-146 (RRTSV) is the Inhibitor sequence (IS) element. Ser145 carries the post-translational modification Phosphoserine; by autocatalysis. Ser147 is subject to Phosphoserine. A phosphothreonine mark is found at Thr150 and Thr160. 3',5'-cyclic AMP-binding positions include 184–301 (LFNK…KSMP), Glu249, Arg258, 302–416 (VLKS…PTRH), Glu368, and Arg377.

The protein belongs to the cAMP-dependent kinase regulatory chain family. The inactive holoenzyme of cAMP-dependent protein kinase is a tetramer, composed of 2 regulatory subunits (R, encoded by BCY1) and two catalytic subunits (C, encoded by the 3 partially redundant TPK1, TPK2, and TPK3 genes). Activation by cAMP causes dissociation of the holoenzyme, producing 2 active catalytic monomers C and a regulatory dimer R(2). In terms of processing, phosphorylated by YAK1 in response to glucose starvation. Phosphorylated by MCK1 at Thr-129 upon TOR complex 1 (TORC1) inhibition. Thr-129 phosphorylation activates BCY1 to inhibit PKA. TORC1 inhibits phosphorylation of RxxS/T sites but has no effect on Ser-145 phosphorylation. The phosphorylation sites can be clustered in several groups, all localized in the N-terminal part. The first cluster termed cluster I (CI) is located close to the N-terminus and includes Ser-3, Ser-4 and Ser-9. The second includes Ser-68, Ser-70, Ser-74, Ser-77, Ser-79, Ser-81, Ser-83, and Ser-84. This cluster of phosphorylation sites, termed cluster II (CII), is important for BCY1 cytoplasmic localization and function. The third cluster of phosphorylated residues consists of Thr-144, Ser-145, Ser-147, Thr-150, and Thr-160. This cluster falls within or near the so-called autoinhibitory domain where the catalytic subunit of PKA autophosphorylates the highly conserved Ser-145 to inhibit BCY1. A last cluster of phosphorylated residues included Thr-129, Ser-130, and Thr-131 and is termed cluster III (CIII). Sites in CIII (and to a lesser extent in CII) are hyperphosphorylated in response to rapamycin.

The protein resides in the cytoplasm. The protein localises to the nucleus. Functionally, regulatory subunit of the cyclic AMP-dependent protein kinase (PKA), an effector of the Ras/cAMP pathway. Inhibits PKA activity in the absence of cAMP. cAMP activates PKA and promotes growth and proliferation in response to good nutrient conditions. Together with ZDS1, provides a negative feedback control on the cell wall integrity-signaling pathway by acting as a negative regulator of MAP kinase SLT2/MPK1. This chain is cAMP-dependent protein kinase regulatory subunit (BCY1), found in Saccharomyces cerevisiae (strain ATCC 204508 / S288c) (Baker's yeast).